The following is a 394-amino-acid chain: Phosphoglycerate kinase (394 aa).

Residues 21-23 (DFN), R36, 59-62 (HLGR), R118, and R151 contribute to the substrate site. Position 183 is a phosphoserine (S183). 2 residues coordinate ATP: K201 and G292. Position 299 is a phosphothreonine (T299). ATP-binding positions include E323 and 350 to 353 (GGDS).

Belongs to the phosphoglycerate kinase family. As to quaternary structure, monomer.

The protein localises to the cytoplasm. It catalyses the reaction (2R)-3-phosphoglycerate + ATP = (2R)-3-phospho-glyceroyl phosphate + ADP. It participates in carbohydrate degradation; glycolysis; pyruvate from D-glyceraldehyde 3-phosphate: step 2/5. The polypeptide is Phosphoglycerate kinase (Bacillus cereus (strain B4264)).